The sequence spans 352 residues: Holliday junction branch migration complex subunit RuvB (352 aa).

The tract at residues 1 to 181 (MTDRIVGAAK…FGIPVRLHFY (181 aa)) is large ATPase domain (RuvB-L). ATP contacts are provided by residues L20, R21, G62, K65, T66, T67, 128–130 (EDF), R171, Y181, and R218. Residue T66 participates in Mg(2+) binding. Positions 182 to 252 (EVAELEGIVR…AADKALQRLE (71 aa)) are small ATPAse domain (RuvB-S). The interval 255 to 352 (ELGLDALDHR…FDGDEENGSA (98 aa)) is head domain (RuvB-H). Residues R291, R310, and R315 each coordinate DNA.

The protein belongs to the RuvB family. Homohexamer. Forms an RuvA(8)-RuvB(12)-Holliday junction (HJ) complex. HJ DNA is sandwiched between 2 RuvA tetramers; dsDNA enters through RuvA and exits via RuvB. An RuvB hexamer assembles on each DNA strand where it exits the tetramer. Each RuvB hexamer is contacted by two RuvA subunits (via domain III) on 2 adjacent RuvB subunits; this complex drives branch migration. In the full resolvosome a probable DNA-RuvA(4)-RuvB(12)-RuvC(2) complex forms which resolves the HJ.

It is found in the cytoplasm. The enzyme catalyses ATP + H2O = ADP + phosphate + H(+). The RuvA-RuvB-RuvC complex processes Holliday junction (HJ) DNA during genetic recombination and DNA repair, while the RuvA-RuvB complex plays an important role in the rescue of blocked DNA replication forks via replication fork reversal (RFR). RuvA specifically binds to HJ cruciform DNA, conferring on it an open structure. The RuvB hexamer acts as an ATP-dependent pump, pulling dsDNA into and through the RuvAB complex. RuvB forms 2 homohexamers on either side of HJ DNA bound by 1 or 2 RuvA tetramers; 4 subunits per hexamer contact DNA at a time. Coordinated motions by a converter formed by DNA-disengaged RuvB subunits stimulates ATP hydrolysis and nucleotide exchange. Immobilization of the converter enables RuvB to convert the ATP-contained energy into a lever motion, pulling 2 nucleotides of DNA out of the RuvA tetramer per ATP hydrolyzed, thus driving DNA branch migration. The RuvB motors rotate together with the DNA substrate, which together with the progressing nucleotide cycle form the mechanistic basis for DNA recombination by continuous HJ branch migration. Branch migration allows RuvC to scan DNA until it finds its consensus sequence, where it cleaves and resolves cruciform DNA. This chain is Holliday junction branch migration complex subunit RuvB, found in Parvibaculum lavamentivorans (strain DS-1 / DSM 13023 / NCIMB 13966).